A 415-amino-acid chain; its full sequence is Phosphoglycerate kinase (415 aa).

Substrate contacts are provided by residues aspartate 24–asparagine 26, arginine 43, histidine 66–arginine 69, arginine 125, and arginine 165. Residues lysine 215, glycine 303, glutamate 334, and glycine 363 to serine 366 each bind ATP.

The protein belongs to the phosphoglycerate kinase family. As to quaternary structure, monomer.

It is found in the cytoplasm. It carries out the reaction (2R)-3-phosphoglycerate + ATP = (2R)-3-phospho-glyceroyl phosphate + ADP. The protein operates within carbohydrate degradation; glycolysis; pyruvate from D-glyceraldehyde 3-phosphate: step 2/5. In Mycobacterium avium (strain 104), this protein is Phosphoglycerate kinase.